The chain runs to 307 residues: Dihydroorotate dehydrogenase B (NAD(+)), catalytic subunit (307 aa).

FMN contacts are provided by residues Ser20 and 44-45 (KT). Substrate-binding positions include Lys44 and 68-72 (NSIGL). Residues Asn98 and Asn126 each coordinate FMN. Asn126 lines the substrate pocket. The Nucleophile role is filled by Cys129. Residues Lys164 and Ile190 each contribute to the FMN site. Position 191–192 (191–192 (NT)) interacts with substrate. FMN is bound by residues Gly216, 242–243 (GG), and 264–265 (GS).

It belongs to the dihydroorotate dehydrogenase family. Type 1 subfamily. As to quaternary structure, heterotetramer of 2 PyrK and 2 PyrD type B subunits. FMN is required as a cofactor.

It localises to the cytoplasm. It catalyses the reaction (S)-dihydroorotate + NAD(+) = orotate + NADH + H(+). The protein operates within pyrimidine metabolism; UMP biosynthesis via de novo pathway; orotate from (S)-dihydroorotate (NAD(+) route): step 1/1. Functionally, catalyzes the conversion of dihydroorotate to orotate with NAD(+) as electron acceptor. This Carboxydothermus hydrogenoformans (strain ATCC BAA-161 / DSM 6008 / Z-2901) protein is Dihydroorotate dehydrogenase B (NAD(+)), catalytic subunit (pyrD).